The chain runs to 1390 residues: MKTPAVLAPGILVLLFTLVQRSNGECKEALAKSKMNVNMKYQLPNFTAETPIQNVILHEHHIFLGATNYIYVLNEEDLQKVAEYKTGPVLEHPDCFPCQDCSSKANLSGGVWKDNINMALVVDTYYDDQLISCGSINRGTCQRHVFPHNHTADIQSEVHCIFSPQIEEPSQCPDCVVSALGAKVLSSVKDRFINFFVGNTINSSYFPDHPLHSISVRRLKETKDGFMFLTDQSYIDVLPEFRDSYPIKYVHAFESNNFIYFLTVQRETLDAQTFHTRIIRFCSINSGLHSYMEMPLECILTEKRKKRSTKKEVFNILQAAYVSKPGAQLARQIGASLNDDILFGVFAQSKPDSAEPMDRSAMCAFPIKYVNDFFNKIVNKNNVRCLQHFYGPNHEHCFNRTLLRNSSGCEARRDEYRTEFTTALQRVDLFMGQFSEVLLTSVSTFIKGDLTIANLGTSEGRFMQVVVSRSGPSTPHVNFLLDSHPVSPEVIVEHPLNQNGYTLVVTGKKITKIPLSGLGCRHFQSCSQCLSAPPFVQCGWCHDKCVRSEECPSGTWTQQICLPAIYKVFPNSAPLEGGTRLTICGWDFGFRRNNKFDLKKTRVLLGNESCTLTLSESTMNTLKCTVGPAMNKHFNMSITISNGHGTTQYSTFSYVDPVITSISPKYGPMAGGTLLTLTGNYLNSGNSRHISIGGKTCTLKSVSNSILECYTPAQTISTEFAVKLKIDLANRETNIFSYREDPIVYEIHPTKSFISGGSTITGVGKNLNSVSVPRMVINVHEAGRNFTVACQHRSNSEIICCTTPSLQQLNLQLPLKTKAFFMLDGILSKYFDLIYVHNPVFKPFEKPVMISMGNENVLEIKGNDIDPEAVKGEVLKVGNKSCENIHLHSEAVLCTVPNDLLKLNSELNIEWKQAISSTVLGKVIVQPDQNFTGLIAGVVSISVALLLLLGFFLWLKKRKQIKDLGSELVRYDARVHTPHLDRLVSARSVSPTTEMVSNESVDYRATFPEDQFPNSSQNGSCRQVQYPLTDMSPILTSGDSDISSPLLQNTVHIDLSALNPELVQAVQHVVIGPSSLIVHFNEVIGRGHFGCVYHGTLLDNDGKKIHCAVKSLNRITDIGEVSQFLTEGIIMKDFSHPNVLSLLGICLRSEGSPLVVLPYMKHGDLRNFIRNETHNPTVKDLIGFGLQVAKGMKYLASKKFVHRDLAARNCMLDEKFTVKVADFGLARDMYDKEYYSVHNKTGAKLPVKWMALESLQTQKFTTKSDVWSFGVLLWELMTRGAPPYPDVNTFDITVYLLQGRRLLQPEYCPDPLYEVMLKCWHPKAEMRPSFSELVSRISAIFSTFIGEHYVHVNATYVNVKCVAPYPSLLSSEDNADNEVDTRPASFWETS.

Positions 1 to 24 (MKTPAVLAPGILVLLFTLVQRSNG) are cleaved as a signal peptide. The Extracellular portion of the chain corresponds to 25–932 (ECKEALAKSK…VIVQPDQNFT (908 aa)). A Sema domain is found at 27 to 515 (KEALAKSKMN…TGKKITKIPL (489 aa)). An N-linked (GlcNAc...) asparagine glycan is attached at asparagine 45. 4 disulfide bridges follow: cysteine 95–cysteine 101, cysteine 98–cysteine 160, cysteine 133–cysteine 141, and cysteine 172–cysteine 175. N-linked (GlcNAc...) asparagine glycosylation occurs at asparagine 106. Asparagine 149 carries N-linked (GlcNAc...) asparagine glycosylation. A glycan (N-linked (GlcNAc...) asparagine) is linked at asparagine 202. 2 disulfides stabilise this stretch: cysteine 298/cysteine 363 and cysteine 385/cysteine 397. 2 N-linked (GlcNAc...) asparagine glycosylation sites follow: asparagine 399 and asparagine 405. 4 cysteine pairs are disulfide-bonded: cysteine 520–cysteine 538, cysteine 526–cysteine 561, cysteine 529–cysteine 545, and cysteine 541–cysteine 551. IPT/TIG domains lie at 563–655 (PAIY…FSYV), 657–739 (PVIT…FSYR), and 742–836 (PIVY…LIYV). O-linked (Man) threonine glycosylation occurs at threonine 582. Residues asparagine 607 and asparagine 635 are each glycosylated (N-linked (GlcNAc...) asparagine). Residues threonine 676 and threonine 761 are each glycosylated (O-linked (Man) threonine). N-linked (GlcNAc...) asparagine glycosylation is found at asparagine 785, asparagine 879, and asparagine 930. Residues 933–955 (GLIAGVVSISVALLLLLGFFLWL) form a helical membrane-spanning segment. Topologically, residues 956–1390 (KKRKQIKDLG…TRPASFWETS (435 aa)) are cytoplasmic. The residue at position 966 (serine 966) is a Phosphoserine. Threonine 977 carries the phosphothreonine modification. 3 positions are modified to phosphoserine: serine 990, serine 997, and serine 1000. Tyrosine 1003 is modified (phosphotyrosine). Positions 1078-1345 (VHFNEVIGRG…RISAIFSTFI (268 aa)) constitute a Protein kinase domain. ATP contacts are provided by residues 1084-1092 (IGRGHFGCV) and lysine 1110. Aspartate 1204 functions as the Proton acceptor in the catalytic mechanism. The tract at residues 1212-1381 (LDEKFTVKVA…EDNADNEVDT (170 aa)) is interaction with RANBP9. Position 1230 is a phosphotyrosine (tyrosine 1230). Phosphotyrosine; by autocatalysis is present on residues tyrosine 1234 and tyrosine 1235. Threonine 1289 is subject to Phosphothreonine. The interval 1320–1359 (WHPKAEMRPSFSELVSRISAIFSTFIGEHYVHVNATYVNV) is interaction with MUC20. Residues tyrosine 1349 and tyrosine 1356 each carry the phosphotyrosine; by autocatalysis modification. Phosphotyrosine is present on tyrosine 1365.

The protein belongs to the protein kinase superfamily. Tyr protein kinase family. As to quaternary structure, heterodimer made of an alpha chain (50 kDa) and a beta chain (145 kDa) which are disulfide linked. Binds PLXNB1. Interacts when phosphorylated with downstream effectors including STAT3, PIK3R1, SRC, PCLG1, GRB2 and GAB1. Interacts with SPSB1, SPSB2 and SPSB4. Interacts with INPP5D/SHIP1. When phosphorylated at Tyr-1356, interacts with INPPL1/SHIP2. Interacts with RANBP9 and RANBP10, as well as SPSB1, SPSB2, SPSB3 and SPSB4. SPSB1 binding occurs in the presence and in the absence of HGF, however HGF treatment has a positive effect on this interaction. Interacts with MUC20; prevents interaction with GRB2 and suppresses hepatocyte growth factor-induced cell proliferation. Interacts with GRB10. Interacts with PTPN1 and PTPN2. Interacts with HSP90AA1 and HSP90AB1; the interaction suppresses MET kinase activity. Interacts with tensin TNS3. Interacts (when phosphorylated) with tensin TNS4 (via SH2 domain); the interaction increases MET protein stability by inhibiting MET endocytosis and subsequent lysosomal degradation. Post-translationally, autophosphorylated in response to ligand binding on Tyr-1234 and Tyr-1235 in the kinase domain leading to further phosphorylation of Tyr-1349 and Tyr-1356 in the C-terminal multifunctional docking site. Dephosphorylated by PTPRJ at Tyr-1349 and Tyr-1365. Dephosphorylated by PTPN1 and PTPN2. Ubiquitinated. Ubiquitination by CBL regulates the receptor stability and activity through proteasomal degradation. In terms of processing, O-mannosylation of IPT/TIG domains by TMEM260 is required for protein maturation. O-mannosylated residues are composed of single mannose glycans that are not elongated or modified.

The protein resides in the membrane. The enzyme catalyses L-tyrosyl-[protein] + ATP = O-phospho-L-tyrosyl-[protein] + ADP + H(+). Its activity is regulated as follows. In its inactive state, the C-terminal tail interacts with the catalytic domain and inhibits the kinase activity. Upon ligand binding, the C-terminal tail is displaced and becomes phosphorylated, thus increasing the kinase activity. In terms of biological role, receptor tyrosine kinase that transduces signals from the extracellular matrix into the cytoplasm by binding to hepatocyte growth factor/HGF ligand. Regulates many physiological processes including proliferation, scattering, morphogenesis and survival. Ligand binding at the cell surface induces autophosphorylation of MET on its intracellular domain that provides docking sites for downstream signaling molecules. Following activation by ligand, interacts with the PI3-kinase subunit PIK3R1, PLCG1, SRC, GRB2, STAT3 or the adapter GAB1. Recruitment of these downstream effectors by MET leads to the activation of several signaling cascades including the RAS-ERK, PI3 kinase-AKT, or PLCgamma-PKC. The RAS-ERK activation is associated with the morphogenetic effects while PI3K/AKT coordinates prosurvival effects. During embryonic development, MET signaling plays a role in gastrulation, development and migration of muscles and neuronal precursors, angiogenesis and kidney formation. In adults, participates in wound healing as well as organ regeneration and tissue remodeling. Also promotes differentiation and proliferation of hematopoietic cells. This Nomascus leucogenys (Northern white-cheeked gibbon) protein is Hepatocyte growth factor receptor (MET).